The following is a 1188-amino-acid chain: DNA-directed RNA polymerase subunit beta (1188 aa).

It belongs to the RNA polymerase beta chain family. As to quaternary structure, the RNAP catalytic core consists of 2 alpha, 1 beta, 1 beta' and 1 omega subunit. When a sigma factor is associated with the core the holoenzyme is formed, which can initiate transcription.

It catalyses the reaction RNA(n) + a ribonucleoside 5'-triphosphate = RNA(n+1) + diphosphate. Functionally, DNA-dependent RNA polymerase catalyzes the transcription of DNA into RNA using the four ribonucleoside triphosphates as substrates. In Streptococcus pyogenes serotype M18 (strain MGAS8232), this protein is DNA-directed RNA polymerase subunit beta.